Consider the following 104-residue polypeptide: Membrane magnesium transporter (104 aa).

Topologically, residues 1-2 (MN) are cytoplasmic. A helical transmembrane segment spans residues 3–23 (LGFLVGVFGVLILSHAAYSTI). The Lumenal portion of the chain corresponds to 24–40 (QYRGLLKIMEEEFSRPP). A helical transmembrane segment spans residues 41–61 (INVILELIIGLALCMWAALTF). Over 62-104 (PGKFLSIHPDSDENRAVFLPDNSDFMIFNHRGRLFPPQIDMKF) the chain is Cytoplasmic.

This sequence belongs to the membrane magnesium transporter (TC 1.A.67) family. Component of the ER membrane protein complex (EMC).

It localises to the endoplasmic reticulum membrane. The protein resides in the golgi apparatus membrane. It is found in the early endosome membrane. Functionally, mediates Mg(2+) transport. The sequence is that of Membrane magnesium transporter from Arabidopsis thaliana (Mouse-ear cress).